Here is a 147-residue protein sequence, read N- to C-terminus: Protein J1 homolog (147 aa).

This sequence belongs to the chordopoxvirinae J1 family. Homodimer. Part of a complex composed of A30, G7, F10 kinase, A15, D2, D3, and J1. Interacts with A45.

Its subcellular location is the virion. The protein localises to the host cytoplasm. In terms of biological role, late protein which is a part of a large complex required for early virion morphogenesis. This complex participates in the formation of virosomes and the incorporation of virosomal contents into nascent immature virions. J1 protein is required for DNA packaging during immature virions (IV) formation. The polypeptide is Protein J1 homolog (Sheeppox virus (strain KS-1) (SPPV)).